The following is a 217-amino-acid chain: Uracil-DNA glycosylase (217 aa).

D62 serves as the catalytic Proton acceptor.

It belongs to the uracil-DNA glycosylase (UDG) superfamily. UNG family.

Its subcellular location is the cytoplasm. It catalyses the reaction Hydrolyzes single-stranded DNA or mismatched double-stranded DNA and polynucleotides, releasing free uracil.. Functionally, excises uracil residues from the DNA which can arise as a result of misincorporation of dUMP residues by DNA polymerase or due to deamination of cytosine. This is Uracil-DNA glycosylase from Streptococcus suis (strain 98HAH33).